The primary structure comprises 90 residues: Acyl-CoA-binding protein (90 aa).

Over residues 1–16 (MGLKEDFEEHAEKAKT) the composition is skewed to basic and acidic residues. Residues 1 to 20 (MGLKEDFEEHAEKAKTLPEN) are disordered. In terms of domain architecture, ACB spans 3–88 (LKEDFEEHAE…VKQLLGEAAA (86 aa)). Residues 30–34 (YGLYK), Lys-56, and Tyr-75 each bind an acyl-CoA.

It belongs to the ACBP family.

In terms of biological role, binds medium- and long-chain acyl-CoA esters with very high affinity and may function as an intracellular carrier of acyl-CoA esters. This is Acyl-CoA-binding protein from Ricinus communis (Castor bean).